The sequence spans 227 residues: Transmembrane emp24 domain-containing protein 1 (227 aa).

The signal sequence occupies residues 1–23 (MMAAGTALGLALWLLLPPVGVGG). Topologically, residues 24–194 (AGPPPIQDGE…LQEGNLERVN (171 aa)) are extracellular. One can recognise a GOLD domain in the interval 43 to 125 (KQCFYQSAPA…EKLVFFELIF (83 aa)). Residues 145–170 (EILEVKMEDIKESIETMRIRLERSIQ) are a coiled coil. The chain crosses the membrane as a helical span at residues 195–215 (FWSAVNVAVLLLVAVLQVCTL). Over 216-227 (KRFFQDKRPVPM) the chain is Cytoplasmic. Positions 218–219 (FF) match the COPII vesicle coat-binding motif. Residues 218–227 (FFQDKRPVPM) carry the COPI vesicle coat-binding motif.

The protein belongs to the EMP24/GP25L family. In terms of assembly, homodimer in endoplasmic reticulum, endoplasmic reticulum-Golgi intermediate compartment and cis-Golgi network. Interacts with IL1RL1. Interacts with RNF26; this interaction is important to modulate innate immune signaling through the cGAS-STING pathway.

It localises to the cell membrane. Its subcellular location is the endoplasmic reticulum membrane. It is found in the golgi apparatus. The protein localises to the cis-Golgi network membrane. The protein resides in the endoplasmic reticulum-Golgi intermediate compartment membrane. Potential role in vesicular protein trafficking, mainly in the early secretory pathway. May act as a cargo receptor at the lumenal side for incorporation of secretory cargo molecules into transport vesicles and may be involved in vesicle coat formation at the cytoplasmic side. Plays a positive role in IL-33-mediated IL-8 and IL-6 production by interacting with interleukin-33 receptor IL1RL1. Plays also a role in the modulation of innate immune signaling through the cGAS-STING pathway by interacting with RNF26. The sequence is that of Transmembrane emp24 domain-containing protein 1 (TMED1) from Bos taurus (Bovine).